Here is a 79-residue protein sequence, read N- to C-terminus: Sec-independent protein translocase protein TatA (79 aa).

Residues 1–21 (MGGWSSPSHWLIILLIVVLLF) traverse the membrane as a helical segment. A compositionally biased stretch (basic and acidic residues) spans 52 to 61 (KNTQKIEENK). Positions 52–79 (KNTQKIEENKNTTNNTSADASIDKTKKA) are disordered.

This sequence belongs to the TatA/E family. The Tat system comprises two distinct complexes: a TatABC complex, containing multiple copies of TatA, TatB and TatC subunits, and a separate TatA complex, containing only TatA subunits. Substrates initially bind to the TatABC complex, which probably triggers association of the separate TatA complex to form the active translocon.

It is found in the cell inner membrane. Functionally, part of the twin-arginine translocation (Tat) system that transports large folded proteins containing a characteristic twin-arginine motif in their signal peptide across membranes. TatA could form the protein-conducting channel of the Tat system. The chain is Sec-independent protein translocase protein TatA from Campylobacter jejuni subsp. jejuni serotype O:6 (strain 81116 / NCTC 11828).